The primary structure comprises 202 residues: uncharacterized protein (202 aa).

Residues isoleucine 175–phenylalanine 195 traverse the membrane as a helical segment.

The protein resides in the membrane. This is an uncharacterized protein from Dictyostelium discoideum (Social amoeba).